Consider the following 252-residue polypeptide: Triosephosphate isomerase (252 aa).

10–12 serves as a coordination point for substrate; the sequence is NWK. His96 (electrophile) is an active-site residue. The active-site Proton acceptor is Glu168. Substrate contacts are provided by residues Gly174, Ser214, and 235-236; that span reads GG.

The protein belongs to the triosephosphate isomerase family. In terms of assembly, homodimer.

The protein localises to the cytoplasm. The enzyme catalyses D-glyceraldehyde 3-phosphate = dihydroxyacetone phosphate. It functions in the pathway carbohydrate biosynthesis; gluconeogenesis. It participates in carbohydrate degradation; glycolysis; D-glyceraldehyde 3-phosphate from glycerone phosphate: step 1/1. Its function is as follows. Involved in the gluconeogenesis. Catalyzes stereospecifically the conversion of dihydroxyacetone phosphate (DHAP) to D-glyceraldehyde-3-phosphate (G3P). The chain is Triosephosphate isomerase from Lactobacillus helveticus (strain DPC 4571).